Reading from the N-terminus, the 345-residue chain is Protein phosphatase 1 regulatory subunit 7 (345 aa).

The disordered stretch occupies residues 1-53 (MATLSVGEPQEMEVDRRGESEESGDDETKRKSLNGEVDSLQAPSTVPEESPVD). Positions 13–30 (EVDRRGESEESGDDETKR) are enriched in basic and acidic residues. LRR repeat units lie at residues 62–83 (EEED…EVLL), 84–105 (KAKT…ESLV), 106–127 (SLRE…QALT), 128–149 (ELEQ…DSLT), 150–171 (KVKK…DHLT), 172–193 (SLQM…DSLS), 194–215 (SLES…DGLH), 216–237 (NLTV…QNLV), 238–259 (NLRE…ENNK), 260–281 (KLST…SHLT), and 282–303 (DLKE…DELK). The 30-residue stretch at 316-345 (NPLQKDPQYRRKIMLALPSVRQIDATFIRF) folds into the LRRCT domain.

The protein belongs to the SDS22 family.

The protein resides in the nucleus. Its function is as follows. Regulatory subunit of protein phosphatase 1. The chain is Protein phosphatase 1 regulatory subunit 7 (ppp1r7) from Danio rerio (Zebrafish).